Consider the following 182-residue polypeptide: Fatty-acid and retinol-binding protein 2 (182 aa).

Positions 1 to 17 are cleaved as a signal peptide; it reads MIRAFLVVALASVAVFS. Coiled-coil stretches lie at residues 46-73 and 131-152; these read LKAITAEEKAALKELAQNHKEYKTEEEF and TLDSLKELAKGYIAEYKALSDD.

This sequence belongs to the fatty-acid and retinol-binding protein (FARBP) family.

It is found in the secreted. Probably binds lipids. The chain is Fatty-acid and retinol-binding protein 2 (far-2) from Caenorhabditis elegans.